Here is a 95-residue protein sequence, read N- to C-terminus: Pyrimidine/purine nucleoside phosphorylase (95 aa).

The protein belongs to the nucleoside phosphorylase PpnP family.

It carries out the reaction a purine D-ribonucleoside + phosphate = a purine nucleobase + alpha-D-ribose 1-phosphate. The enzyme catalyses adenosine + phosphate = alpha-D-ribose 1-phosphate + adenine. It catalyses the reaction cytidine + phosphate = cytosine + alpha-D-ribose 1-phosphate. The catalysed reaction is guanosine + phosphate = alpha-D-ribose 1-phosphate + guanine. It carries out the reaction inosine + phosphate = alpha-D-ribose 1-phosphate + hypoxanthine. The enzyme catalyses thymidine + phosphate = 2-deoxy-alpha-D-ribose 1-phosphate + thymine. It catalyses the reaction uridine + phosphate = alpha-D-ribose 1-phosphate + uracil. The catalysed reaction is xanthosine + phosphate = alpha-D-ribose 1-phosphate + xanthine. Functionally, catalyzes the phosphorolysis of diverse nucleosides, yielding D-ribose 1-phosphate and the respective free bases. Can use uridine, adenosine, guanosine, cytidine, thymidine, inosine and xanthosine as substrates. Also catalyzes the reverse reactions. This Enterobacter sp. (strain 638) protein is Pyrimidine/purine nucleoside phosphorylase.